A 299-amino-acid chain; its full sequence is Leucine zipper transcription factor-like protein 1 (299 aa).

The interaction with BSS9 stretch occupies residues 145–299 (GTTELLNKEI…KRLAKYESED (155 aa)). The stretch at 145-299 (GTTELLNKEI…KRLAKYESED (155 aa)) forms a coiled coil.

This sequence belongs to the LZTFL1 family. As to quaternary structure, self-associates. Interacts with BBS9; the interaction mediates the association of LZTL1 with the BBsome complex and regulates BBSome ciliary trafficking.

It localises to the cytoplasm. Functionally, regulates ciliary localization of the BBSome complex. Together with the BBSome complex, controls SMO ciliary trafficking and contributes to the sonic hedgehog (SHH) pathway regulation. May play a role in neurite outgrowth. May have tumor suppressor function. In Rattus norvegicus (Rat), this protein is Leucine zipper transcription factor-like protein 1 (Lztfl1).